Here is a 115-residue protein sequence, read N- to C-terminus: Large ribosomal subunit protein bL19 (115 aa).

The protein belongs to the bacterial ribosomal protein bL19 family.

This protein is located at the 30S-50S ribosomal subunit interface and may play a role in the structure and function of the aminoacyl-tRNA binding site. This is Large ribosomal subunit protein bL19 from Akkermansia muciniphila (strain ATCC BAA-835 / DSM 22959 / JCM 33894 / BCRC 81048 / CCUG 64013 / CIP 107961 / Muc).